A 576-amino-acid polypeptide reads, in one-letter code: Proline--tRNA ligase (576 aa).

It belongs to the class-II aminoacyl-tRNA synthetase family. ProS type 1 subfamily. Homodimer.

It localises to the cytoplasm. It catalyses the reaction tRNA(Pro) + L-proline + ATP = L-prolyl-tRNA(Pro) + AMP + diphosphate. Its function is as follows. Catalyzes the attachment of proline to tRNA(Pro) in a two-step reaction: proline is first activated by ATP to form Pro-AMP and then transferred to the acceptor end of tRNA(Pro). As ProRS can inadvertently accommodate and process non-cognate amino acids such as alanine and cysteine, to avoid such errors it has two additional distinct editing activities against alanine. One activity is designated as 'pretransfer' editing and involves the tRNA(Pro)-independent hydrolysis of activated Ala-AMP. The other activity is designated 'posttransfer' editing and involves deacylation of mischarged Ala-tRNA(Pro). The misacylated Cys-tRNA(Pro) is not edited by ProRS. This Pelobacter propionicus (strain DSM 2379 / NBRC 103807 / OttBd1) protein is Proline--tRNA ligase.